Consider the following 277-residue polypeptide: Undecaprenyl-diphosphatase (277 aa).

The next 7 membrane-spanning stretches (helical) occupy residues 1–21 (MTWI…FLPI), 41–61 (GAAF…IYFW), 90–110 (WLII…EDWI), 114–134 (FRSL…LALA), 191–211 (AFLL…YTSL), 224–244 (ETLV…AWLM), and 255–275 (FVWY…AGVI).

Belongs to the UppP family.

The protein localises to the cell membrane. The enzyme catalyses di-trans,octa-cis-undecaprenyl diphosphate + H2O = di-trans,octa-cis-undecaprenyl phosphate + phosphate + H(+). Its function is as follows. Catalyzes the dephosphorylation of undecaprenyl diphosphate (UPP). Confers resistance to bacitracin. The protein is Undecaprenyl-diphosphatase of Micrococcus luteus (strain ATCC 4698 / DSM 20030 / JCM 1464 / CCM 169 / CCUG 5858 / IAM 1056 / NBRC 3333 / NCIMB 9278 / NCTC 2665 / VKM Ac-2230) (Micrococcus lysodeikticus).